Reading from the N-terminus, the 421-residue chain is D-aspartate ligase (421 aa).

One can recognise an ATP-grasp domain in the interval 130–332 (YEVCEEYDLP…LARFVTEDRV (203 aa)). 161 to 224 (PFEFPVALKP…QDFIPGDDSN (64 aa)) serves as a coordination point for ATP. Mg(2+) is bound by residues Asp-290, Glu-304, and Asn-306.

Requires Mg(2+) as cofactor.

The catalysed reaction is [beta-GlcNAc-(1-&gt;4)-Mur2Ac(oyl-L-Ala-gamma-D-Glu-L-Lys-D-Ala-D-Ala)](n) + n D-aspartate + n ATP = [beta-GlcNAc-(1-&gt;4)-Mur2Ac(oyl-L-Ala-gamma-D-Glu-6-N-(beta-D-Asp)-L-Lys-D-Ala-D-Ala)]n + n ADP + n phosphate + n H(+). Its pathway is cell wall biogenesis; peptidoglycan biosynthesis. Catalyzes the addition of D-aspartate onto the lysine residue in the peptidoglycan precursor UDP-MurNAc-pentapeptide. The ligation occurs between the beta-carboxylate of D-Asp and the epsilon-amino group of L-Lys. Is highly specific for D-aspartate, as L-aspartate, D-glutamate, D-alanine, D-iso-asparagine and D-malate are not substrates. The polypeptide is D-aspartate ligase (Enterococcus faecium (strain Aus0004)).